We begin with the raw amino-acid sequence, 347 residues long: Protein RecA (347 aa).

ATP is bound at residue 64–71 (GPESSGKT).

The protein belongs to the RecA family.

The protein localises to the cytoplasm. Can catalyze the hydrolysis of ATP in the presence of single-stranded DNA, the ATP-dependent uptake of single-stranded DNA by duplex DNA, and the ATP-dependent hybridization of homologous single-stranded DNAs. It interacts with LexA causing its activation and leading to its autocatalytic cleavage. The chain is Protein RecA from Bartonella quintana (strain Toulouse) (Rochalimaea quintana).